The following is a 518-amino-acid chain: Glutamate--cysteine ligase (518 aa).

This sequence belongs to the glutamate--cysteine ligase type 1 family. Type 1 subfamily.

The catalysed reaction is L-cysteine + L-glutamate + ATP = gamma-L-glutamyl-L-cysteine + ADP + phosphate + H(+). Its pathway is sulfur metabolism; glutathione biosynthesis; glutathione from L-cysteine and L-glutamate: step 1/2. The chain is Glutamate--cysteine ligase from Salmonella paratyphi C (strain RKS4594).